A 210-amino-acid chain; its full sequence is MENLIVAVVAYLIGSVSFAVIVSAAMGLADPRSYGSKNPGATNVLRSGNKKAAILTLIGDAFKGWLAVWLTGHFSAHFGLDDTSVAIAAIAVFLGHLYPVFFRFKGGKGVATAAGVLLAINPILGIATLLTWLIVAFFTRYSSLAALCAAIFAPLFDGFLFGANVIALSIVAMSALLIWRHRANIAKLVAGQESRIGDKKKAEAAASHKH.

5 helical membrane-spanning segments follow: residues L4–A24, A52–G72, D82–F102, L118–F138, and F159–W179.

The protein belongs to the PlsY family. In terms of assembly, probably interacts with PlsX.

It is found in the cell inner membrane. The enzyme catalyses an acyl phosphate + sn-glycerol 3-phosphate = a 1-acyl-sn-glycero-3-phosphate + phosphate. The protein operates within lipid metabolism; phospholipid metabolism. In terms of biological role, catalyzes the transfer of an acyl group from acyl-phosphate (acyl-PO(4)) to glycerol-3-phosphate (G3P) to form lysophosphatidic acid (LPA). This enzyme utilizes acyl-phosphate as fatty acyl donor, but not acyl-CoA or acyl-ACP. The chain is Glycerol-3-phosphate acyltransferase from Paraburkholderia phymatum (strain DSM 17167 / CIP 108236 / LMG 21445 / STM815) (Burkholderia phymatum).